A 936-amino-acid chain; its full sequence is Bifunctional uridylyltransferase/uridylyl-removing enzyme (936 aa).

The segment at 1–372 (MTIPRIRQPR…SIATLLMRKR (372 aa)) is uridylyltransferase. The interval 373 to 727 (NLGDFVLDGG…VLPDPERAVS (355 aa)) is uridylyl-removing. One can recognise an HD domain in the interval 488 to 610 (TDEHTIRAIG…VQSVERLHLL (123 aa)). ACT domains follow at residues 728–809 (EVLV…KALR) and 840–915 (VIEI…TVPR). Residues 915-930 (RKVEEGAEQGAEKADA) are compositionally biased toward basic and acidic residues. A disordered region spans residues 915 to 936 (RKVEEGAEQGAEKADAGEIVAA).

This sequence belongs to the GlnD family. Mg(2+) serves as cofactor.

It carries out the reaction [protein-PII]-L-tyrosine + UTP = [protein-PII]-uridylyl-L-tyrosine + diphosphate. The enzyme catalyses [protein-PII]-uridylyl-L-tyrosine + H2O = [protein-PII]-L-tyrosine + UMP + H(+). Its activity is regulated as follows. Uridylyltransferase (UTase) activity is inhibited by glutamine, while glutamine activates uridylyl-removing (UR) activity. Functionally, modifies, by uridylylation and deuridylylation, the PII regulatory proteins (GlnB and homologs), in response to the nitrogen status of the cell that GlnD senses through the glutamine level. Under low glutamine levels, catalyzes the conversion of the PII proteins and UTP to PII-UMP and PPi, while under higher glutamine levels, GlnD hydrolyzes PII-UMP to PII and UMP (deuridylylation). Thus, controls uridylylation state and activity of the PII proteins, and plays an important role in the regulation of nitrogen fixation and metabolism. The sequence is that of Bifunctional uridylyltransferase/uridylyl-removing enzyme from Rhodospirillum rubrum (strain ATCC 11170 / ATH 1.1.1 / DSM 467 / LMG 4362 / NCIMB 8255 / S1).